Reading from the N-terminus, the 374-residue chain is DNA replication and repair protein RecF (374 aa).

30–37 (GHNAQGKT) serves as a coordination point for ATP.

Belongs to the RecF family.

The protein localises to the cytoplasm. Its function is as follows. The RecF protein is involved in DNA metabolism; it is required for DNA replication and normal SOS inducibility. RecF binds preferentially to single-stranded, linear DNA. It also seems to bind ATP. The protein is DNA replication and repair protein RecF of Limosilactobacillus reuteri (strain DSM 20016) (Lactobacillus reuteri).